A 555-amino-acid chain; its full sequence is Xylulose kinase (555 aa).

H88, R158, D274, and N275 together coordinate substrate. ATP-binding positions include W357, 455-456 (GA), and N459.

The protein belongs to the FGGY kinase family.

It localises to the cytoplasm. It carries out the reaction D-xylulose + ATP = D-xylulose 5-phosphate + ADP + H(+). The polypeptide is Xylulose kinase (Schizosaccharomyces pombe (strain 972 / ATCC 24843) (Fission yeast)).